A 40-amino-acid chain; its full sequence is Photosystem II reaction center protein J (40 aa).

A helical membrane pass occupies residues 8-28; sequence IPLCLIGTVAGIAVIGLVGVF.

The protein belongs to the PsbJ family. As to quaternary structure, PSII is composed of 1 copy each of membrane proteins PsbA, PsbB, PsbC, PsbD, PsbE, PsbF, PsbH, PsbI, PsbJ, PsbK, PsbL, PsbM, PsbT, PsbX, PsbY, PsbZ, Psb30/Ycf12, at least 3 peripheral proteins of the oxygen-evolving complex and a large number of cofactors. It forms dimeric complexes.

It is found in the plastid. It localises to the chloroplast thylakoid membrane. One of the components of the core complex of photosystem II (PSII). PSII is a light-driven water:plastoquinone oxidoreductase that uses light energy to abstract electrons from H(2)O, generating O(2) and a proton gradient subsequently used for ATP formation. It consists of a core antenna complex that captures photons, and an electron transfer chain that converts photonic excitation into a charge separation. This is Photosystem II reaction center protein J from Triticum aestivum (Wheat).